The primary structure comprises 120 residues: UPF0145 protein Bcenmc03_5217 (120 aa).

It belongs to the UPF0145 family.

This chain is UPF0145 protein Bcenmc03_5217, found in Burkholderia orbicola (strain MC0-3).